The following is a 71-amino-acid chain: MPAGVPMSTYLKMLAASLLAMCAGAEVVHRYYRPDLTIPEIPPKRGELKTELLGLKERKHKPQISQQEELK.

Topologically, residues 1 to 8 are mitochondrial matrix; it reads MPAGVPMS. A helical; Signal-anchor for type II membrane protein membrane pass occupies residues 9–25; it reads TYLKMLAASLLAMCAGA. Over 26-71 the chain is Mitochondrial intermembrane; the sequence is EVVHRYYRPDLTIPEIPPKRGELKTELLGLKERKHKPQISQQEELK. A disordered region spans residues 52 to 71; it reads LLGLKERKHKPQISQQEELK.

It belongs to the UQCC6 family. In terms of assembly, interacts with UQCRC1. Interacts with UQCRQ. Interacts with UQCC5. Forms a complex, named COMB/coordinator of mitochondrial CYTB biogenesis, composed of UQCC1, UQCC2, UQCC4, UQCC5 and UQCC6; stabilizes nascent cytochrome b/MT-CYB and promotes its membrane insertion. Forms a complex, named COMA, composed of UQCC1, UQCC2 and UQCC4; activates MT-CYB translation. Forms a complex, named COMC, composed of UQCC1, UQCC2; UQCC3 and UQCC4; mediates MT-CYB hemylation and association with the first nuclear-encoded complex III subunit UQCRQ. Interacts with MT-CYB.

The protein localises to the mitochondrion inner membrane. Required for the assembly and stability of the mitochondrial ubiquinol-cytochrome c reductase complex (complex III (CIII) or cytochrome b-c1 complex), a multisubunit transmembrane complex that is part of the mitochondrial electron transport chain (ETC) which drives oxidative phosphorylation. Mediates early complex III biogenesis. Participates in regulating the levels of electron transport chain proteins, and therefore energy supply, in response to changes in energy demand. Also required for cytochrome c oxidase complex (complex IV) assembly. In Pongo abelii (Sumatran orangutan), this protein is Ubiquinol-cytochrome c reductase complex assembly factor 6.